The sequence spans 203 residues: N-(5'-phosphoribosyl)anthranilate isomerase (203 aa).

The protein belongs to the TrpF family.

It carries out the reaction N-(5-phospho-beta-D-ribosyl)anthranilate = 1-(2-carboxyphenylamino)-1-deoxy-D-ribulose 5-phosphate. It functions in the pathway amino-acid biosynthesis; L-tryptophan biosynthesis; L-tryptophan from chorismate: step 3/5. The protein is N-(5'-phosphoribosyl)anthranilate isomerase of Thermoanaerobacter pseudethanolicus (strain ATCC 33223 / 39E) (Clostridium thermohydrosulfuricum).